A 440-amino-acid chain; its full sequence is Chromosome partition protein MukF (440 aa).

A leucine-zipper region spans residues 208–236 (LSETSGTLRELQDTLEAAGDKLQANLLRI).

It belongs to the MukF family. In terms of assembly, interacts, and probably forms a ternary complex, with MukE and MukB via its C-terminal region. The complex formation is stimulated by calcium or magnesium. It is required for an interaction between MukE and MukB.

It localises to the cytoplasm. Its subcellular location is the nucleoid. Involved in chromosome condensation, segregation and cell cycle progression. May participate in facilitating chromosome segregation by condensation DNA from both sides of a centrally located replisome during cell division. Not required for mini-F plasmid partitioning. Probably acts via its interaction with MukB and MukE. Overexpression results in anucleate cells. It has a calcium binding activity. The protein is Chromosome partition protein MukF of Photorhabdus laumondii subsp. laumondii (strain DSM 15139 / CIP 105565 / TT01) (Photorhabdus luminescens subsp. laumondii).